The sequence spans 370 residues: Glutamine synthetase (370 aa).

Residue A2 is modified to N-acetylalanine. The residue at position 5 (S5) is a Phosphoserine. The GS beta-grasp domain maps to 24–103 (IIAEYVWIDG…VLAACYNNDG (80 aa)). The GS catalytic domain maps to 110 to 370 (HRHEAAKLFA…MTKEFERESS (261 aa)). Residues K283, K324, and K363 each participate in a glycyl lysine isopeptide (Lys-Gly) (interchain with G-Cter in ubiquitin) cross-link.

It belongs to the glutamine synthetase family. Homooctamer.

The protein localises to the cytoplasm. It carries out the reaction L-glutamate + NH4(+) + ATP = L-glutamine + ADP + phosphate + H(+). The polypeptide is Glutamine synthetase (GLN1) (Saccharomyces cerevisiae (strain ATCC 204508 / S288c) (Baker's yeast)).